The chain runs to 236 residues: Uridylate kinase (236 aa).

10 to 13 is an ATP binding site; that stretch reads KLSG. UMP is bound at residue glycine 52. ATP contacts are provided by glycine 53 and arginine 57. UMP contacts are provided by residues aspartate 72 and 133–140; that span reads TGNPFFTT. ATP contacts are provided by threonine 160, tyrosine 166, and aspartate 169.

Belongs to the UMP kinase family. As to quaternary structure, homohexamer.

The protein resides in the cytoplasm. It carries out the reaction UMP + ATP = UDP + ADP. It functions in the pathway pyrimidine metabolism; CTP biosynthesis via de novo pathway; UDP from UMP (UMPK route): step 1/1. Its activity is regulated as follows. Inhibited by UTP. In terms of biological role, catalyzes the reversible phosphorylation of UMP to UDP. This chain is Uridylate kinase, found in Bacteroides fragilis (strain ATCC 25285 / DSM 2151 / CCUG 4856 / JCM 11019 / LMG 10263 / NCTC 9343 / Onslow / VPI 2553 / EN-2).